The chain runs to 53 residues: Metallothionein (53 aa).

Belongs to the metallothionein superfamily. Type 14 family.

Its function is as follows. This protein complexes cadmium, zinc and copper. This Synechococcus sp protein is Metallothionein.